The primary structure comprises 288 residues: UDP-3-O-acyl-N-acetylglucosamine deacetylase (288 aa).

Residues His79, His236, and Asp240 each contribute to the Zn(2+) site. His263 functions as the Proton donor in the catalytic mechanism.

This sequence belongs to the LpxC family. Zn(2+) is required as a cofactor.

It carries out the reaction a UDP-3-O-[(3R)-3-hydroxyacyl]-N-acetyl-alpha-D-glucosamine + H2O = a UDP-3-O-[(3R)-3-hydroxyacyl]-alpha-D-glucosamine + acetate. It functions in the pathway glycolipid biosynthesis; lipid IV(A) biosynthesis; lipid IV(A) from (3R)-3-hydroxytetradecanoyl-[acyl-carrier-protein] and UDP-N-acetyl-alpha-D-glucosamine: step 2/6. In terms of biological role, catalyzes the hydrolysis of UDP-3-O-myristoyl-N-acetylglucosamine to form UDP-3-O-myristoylglucosamine and acetate, the committed step in lipid A biosynthesis. This Rickettsia felis (strain ATCC VR-1525 / URRWXCal2) (Rickettsia azadi) protein is UDP-3-O-acyl-N-acetylglucosamine deacetylase.